Consider the following 185-residue polypeptide: Histone H1-delta (185 aa).

Disordered stretches follow at residues 1-37 (MADT…PKYS) and 90-185 (RHVK…GKKK). One can recognise an H15 domain in the interval 32–105 (SHPKYSDMIA…GASGSFLLAE (74 aa)). Residues 109 to 185 (TPKKAAAKKA…KAAKGKGKKK (77 aa)) show a composition bias toward basic residues.

This sequence belongs to the histone H1/H5 family.

The protein localises to the nucleus. It is found in the chromosome. Functionally, histones H1 are necessary for the condensation of nucleosome chains into higher-order structures. This is Histone H1-delta from Strongylocentrotus purpuratus (Purple sea urchin).